Consider the following 36-residue polypeptide: Peroxiredoxin-4 (36 aa).

Belongs to the peroxiredoxin family. AhpC/Prx1 subfamily. Homodimer; disulfide-linked, upon oxidation. In terms of tissue distribution, venom gland.

The protein resides in the secreted. The enzyme catalyses a hydroperoxide + [thioredoxin]-dithiol = an alcohol + [thioredoxin]-disulfide + H2O. In terms of biological role, venom peroxiredoxin enzyme that may play a role as part of a redox pathway leading to the structural/functional diversification of toxins through a disulfide bond engineering mechanism. This Crotalus atrox (Western diamondback rattlesnake) protein is Peroxiredoxin-4.